The primary structure comprises 724 residues: MGDEDWEAEINPHMSSYVPIFEKDRYSGENGDNFNRTPASSSEMDDGPSRRDHFMKSGFASGRNFGNRDAGECNKRDNTSTMGGFGVGKSFGNRGFSNSRFEDGDSSGFWRESSNDCEDNPTRNRGFSKRGGYRDGNNSEASGPYRRGGRGSFRGCRGGFGLGSPNNDLDPDECMQRTGGLFGSRRPVLSGTGNGDTSQSRSGSGSERGGYKGLNEEVITGSGKNSWKSEAEGGESSDTQGPKVTYIPPPPPEDEDSIFAHYQTGINFDKYDTILVEVSGHDAPPAILTFEEANLCQTLNNNIAKAGYTKLTPVQKYSIPIILAGRDLMACAQTGSGKTAAFLLPILAHMMHDGITASRFKELQEPECIIVAPTRELVNQIYLEARKFSFGTCVRAVVIYGGTQLGHSIRQIVQGCNILCATPGRLMDIIGKEKIGLKQIKYLVLDEADRMLDMGFGPEMKKLISCPGMPSKEQRQTLMFSATFPEEIQRLAAEFLKSNYLFVAVGQVGGACRDVQQTVLQVGQFSKREKLVEILRNIGDERTMVFVETKKKADFIATFLCQEKISTTSIHGDREQREREQALGDFRFGKCPVLVATSVAARGLDIENVQHVINFDLPSTIDEYVHRIGRTGRCGNTGRAISFFDLESDNHLAQPLVKVLTDAQQDVPAWLEEIAFSTYIPGFSGSTRGNVFASVDTRKGKSTLNTAGFSSSQAPNPVDDESWD.

Residues methionine 1–tyrosine 246 form a disordered region. Over residues asparagine 30–serine 42 the composition is skewed to polar residues. A compositionally biased stretch (basic and acidic residues) spans aspartate 69–asparagine 78. Positions arginine 150–leucine 162 are enriched in gly residues. Over residues glycine 195–glycine 205 the composition is skewed to low complexity. A phosphoserine mark is found at serine 222 and serine 226. The interval lysine 228–isoleucine 247 is interaction with RANBP9. The Q motif signature appears at leucine 288–lysine 316. The Helicase ATP-binding domain maps to isoleucine 319–phenylalanine 502. Alanine 332–threonine 339 provides a ligand contact to ATP. The DEAD box motif lies at aspartate 446–aspartate 449. The region spanning lysine 530–alanine 675 is the Helicase C-terminal domain. A compositionally biased stretch (polar residues) spans leucine 704 to proline 715. The tract at residues leucine 704–aspartate 724 is disordered. A Phosphoserine modification is found at serine 722.

The protein belongs to the DEAD box helicase family. DDX4/VASA subfamily. Found in a mRNP complex, at least composed of TDRD1, TDRD6, TDRD7 and DDX4. Interacts with RANBP9. Interacts with RANBP10. Interacts with PIWIL2 and MAEL. Interacts with BMAL1 and CLOCK. Interacts with Tex19.1 and, probably, Tex19.2. Interacts with RBM46. As to expression, expressed only in ovary and testis. Expressed in migratory primordial germ cells in the region of the gonadal ridge in both sexes.

It is found in the cytoplasm. It localises to the perinuclear region. It carries out the reaction ATP + H2O = ADP + phosphate + H(+). Functionally, ATP-dependent RNA helicase required during spermatogenesis. Required to repress transposable elements and preventing their mobilization, which is essential for the germline integrity. Acts via the piRNA metabolic process, which mediates the repression of transposable elements during meiosis by forming complexes composed of piRNAs and Piwi proteins and governs the methylation and subsequent repression of transposons. Involved in the secondary piRNAs metabolic process, the production of piRNAs in fetal male germ cells through a ping-pong amplification cycle. Required for PIWIL2 slicing-triggered piRNA biogenesis: helicase activity enables utilization of one of the slice cleavage fragments generated by PIWIL2 and processing these pre-piRNAs into piRNAs. This chain is Probable ATP-dependent RNA helicase DDX4 (DDX4), found in Homo sapiens (Human).